The primary structure comprises 309 residues: Assembly-complementing factor 4 (309 aa).

Disordered stretches follow at residues 1 to 80, 164 to 240, and 286 to 309; these read MSED…ASPI, KSIN…ENTP, and VRSEDEDDEEFEPMGDIPVHLFKR. Basic and acidic residues-rich tracts occupy residues 13–24 and 34–44; these read ELHKLSIVDKHS and KQHEVQPESKS. Phosphoserine is present on residues Ser-44, Ser-71, Ser-74, Ser-78, and Ser-165. The span at 61–80 shows a compositional bias: polar residues; the sequence is SSPQRSTTNQSPVSDHASPI. Composition is skewed to low complexity over residues 174-188, 205-214, and 222-239; these read NNNVNSNINNTLPNR, PSRSSESTPT, and PRNTMKNANTTATAGENT. A compositionally biased stretch (acidic residues) spans 287–298; sequence RSEDEDDEEFEP. Ser-288 is subject to Phosphoserine.

May be involved in actin cytoskeleton organization and biogenesis. The chain is Assembly-complementing factor 4 (ACF4) from Saccharomyces cerevisiae (strain ATCC 204508 / S288c) (Baker's yeast).